The primary structure comprises 996 residues: MAAFPRFRFLAIAVIFHFAYIFSIFDIYFVSPIETGMRLFNVQRPPNRSAPADRLVLFVGDGLRADKALQSHPEPYPKSDADLTPRPLAPYLRSKILEQGTFGVSHTRVPTESRPGHVALIAGLYEDVSAVTTGWKLNPVNFDSLFNRSRHTWSWGSPDILPMFEQGAVPGRVDAYTYGHEFEDFSSDATQLDLWVFDHVKDFFAEARRNKTLAEALRQDKIVFFLHLLGLDTTGHSYRPYSKEYLNNIKIVDQGVKEVAELFRDFYRDGRTAFVFTADHGMSDWGSHGDGHPDNTRTPLIVWGSGVAKPQLYPGEVAPGHDEYSADWNLDHVRRHDVAQADVAALMSYLVGVEFPANSVGELPLSYLAADIKEKAEASLVNVQGILEQYRVKEEKKKATELKYRPYQPFGENGLSPERRVAEIRQLIDAGRYEEAIEESAALMKVGLGGLRYLQTYDWLFLRALITIGYLGWIAYALTTVVDLHVLHGRVRPSRTLGGGLFFTSVLVALYASLVISKSPLTYYVYAFFPVFFWEEVYAHRESLAAGRKELLGHINSGGSVASFVLNSALYVGVIESLALGYIHREILSVLFVLGSFWPFTHGLSFLKKHGALSATWFLACIAMSTFTLLPAMKAENVNLITIGGVLMVVIGLLYLIFEDFVLADFSWNAKPTSRNHLSRSLVGIQVGLTVLSIIITRSSALSLQAKQGLPRGNQIMGWVTLVASLLMPLAYRLRPNNHYMHRILVIFLTCAPTFVILTISYEGLFYLVFSALLVSWVRLEHAVQKFTSSKAPQTAATKKPTTTTESHLPAPFRPLTLHDARVALFFFILLQSAFFSTGNVASVSSFSLDSVYRLIPIFDPFSQGAMLILKLMIPFALISANLGILNKRLGVAPSALFMVVMGISDILTLYFFWVVKDEGSWLEIGSTISHFVIASLLCVFVSALEPVSAAFIAGVEVGEESELKEEGKVAEKVVEKVNEAVEGLVSGGDGGGDES.

Over 1–8 (MAAFPRFR) the chain is Cytoplasmic. A helical transmembrane segment spans residues 9–29 (FLAIAVIFHFAYIFSIFDIYF). Over 30-463 (VSPIETGMRL…LQTYDWLFLR (434 aa)) the chain is Lumenal. 3 N-linked (GlcNAc...) asparagine glycosylation sites follow: asparagine 47, asparagine 147, and asparagine 210. The chain crosses the membrane as a helical span at residues 464 to 484 (ALITIGYLGWIAYALTTVVDL). Residues 485–495 (HVLHGRVRPSR) lie on the Cytoplasmic side of the membrane. The chain crosses the membrane as a helical span at residues 496 to 516 (TLGGGLFFTSVLVALYASLVI). Residues 517 to 518 (SK) lie on the Lumenal side of the membrane. Residues 519–539 (SPLTYYVYAFFPVFFWEEVYA) form a helical membrane-spanning segment. The Cytoplasmic segment spans residues 540-560 (HRESLAAGRKELLGHINSGGS). A helical transmembrane segment spans residues 561-581 (VASFVLNSALYVGVIESLALG). Residues 582–586 (YIHRE) are Lumenal-facing. The helical transmembrane segment at 587–607 (ILSVLFVLGSFWPFTHGLSFL) threads the bilayer. Residues 608-612 (KKHGA) lie on the Cytoplasmic side of the membrane. The chain crosses the membrane as a helical span at residues 613-633 (LSATWFLACIAMSTFTLLPAM). Residues 634–637 (KAEN) are Lumenal-facing. The chain crosses the membrane as a helical span at residues 638–658 (VNLITIGGVLMVVIGLLYLIF). The Cytoplasmic portion of the chain corresponds to 659 to 681 (EDFVLADFSWNAKPTSRNHLSRS). Residues 682 to 702 (LVGIQVGLTVLSIIITRSSAL) form a helical membrane-spanning segment. Residues 703–715 (SLQAKQGLPRGNQ) lie on the Lumenal side of the membrane. Residues 716-734 (IMGWVTLVASLLMPLAYRL) traverse the membrane as a helical segment. Residues 735–754 (RPNNHYMHRILVIFLTCAPT) are Cytoplasmic-facing. A helical membrane pass occupies residues 755-775 (FVILTISYEGLFYLVFSALLV). Residues 776–822 (SWVRLEHAVQKFTSSKAPQTAATKKPTTTTESHLPAPFRPLTLHDAR) lie on the Lumenal side of the membrane. The chain crosses the membrane as a helical span at residues 823–843 (VALFFFILLQSAFFSTGNVAS). At 844-865 (VSSFSLDSVYRLIPIFDPFSQG) the chain is on the cytoplasmic side. The chain crosses the membrane as a helical span at residues 866–886 (AMLILKLMIPFALISANLGIL). At 887–895 (NKRLGVAPS) the chain is on the lumenal side. The helical transmembrane segment at 896-916 (ALFMVVMGISDILTLYFFWVV) threads the bilayer. At 917-932 (KDEGSWLEIGSTISHF) the chain is on the cytoplasmic side. A helical membrane pass occupies residues 933–953 (VIASLLCVFVSALEPVSAAFI). Over 954–996 (AGVEVGEESELKEEGKVAEKVVEKVNEAVEGLVSGGDGGGDES) the chain is Lumenal.

Belongs to the PIGG/PIGN/PIGO family. PIGN subfamily.

It localises to the endoplasmic reticulum membrane. The protein operates within glycolipid biosynthesis; glycosylphosphatidylinositol-anchor biosynthesis. In terms of biological role, ethanolamine phosphate transferase involved in glycosylphosphatidylinositol-anchor biosynthesis. Transfers ethanolamine phosphate to the first alpha-1,4-linked mannose of the glycosylphosphatidylinositol precursor of GPI-anchor. The polypeptide is GPI ethanolamine phosphate transferase 1 (mcd-4) (Neurospora crassa (strain ATCC 24698 / 74-OR23-1A / CBS 708.71 / DSM 1257 / FGSC 987)).